The following is a 232-amino-acid chain: MKAAVSLALLVAVAGAASAHNIFPNLIVDGTVTGDWEFVRTTANKWSREGLTNVNSESMRCYEEAGRPPSEVKTVKAGSRVGFASQAPIRHIGPVLFYMARVPDGQDVDSWTPSGDVWFKIHQQGPERSESGWTWPTQDQTELFVDIPASVPDGNYLLRIEQIALHDAQYVGGAQFYLACGQINVTGGGSGDPGPKVSFPGAYKPTDPGILLDLHGHPPANYQFPGPAVWQG.

The signal sequence occupies residues 1–19 (MKAAVSLALLVAVAGAASA). The Cu(2+) site is built by H20 and H91. An intrachain disulfide couples C61 to C180. Residues H166 and Q175 each coordinate O2. A Cu(2+)-binding site is contributed by Y177. N184 carries N-linked (GlcNAc...) asparagine glycosylation.

It belongs to the polysaccharide monooxygenase AA9 family. It depends on Cu(2+) as a cofactor.

The protein localises to the secreted. The enzyme catalyses [(1-&gt;4)-beta-D-glucosyl]n+m + reduced acceptor + O2 = 4-dehydro-beta-D-glucosyl-[(1-&gt;4)-beta-D-glucosyl]n-1 + [(1-&gt;4)-beta-D-glucosyl]m + acceptor + H2O.. Functionally, lytic polysaccharide monooxygenase (LPMO) that depolymerizes crystalline and amorphous polysaccharides via the oxidation of scissile alpha- or beta-(1-4)-glycosidic bonds, yielding C1 or C4 oxidation products. Catalysis by LPMOs requires the reduction of the active-site copper from Cu(II) to Cu(I) by a reducing agent and H(2)O(2) or O(2) as a cosubstrate. In Malbranchea cinnamomea (Thermophilic fungus), this protein is AA9 family lytic polysaccharide monooxygenase C.